Consider the following 331-residue polypeptide: Reticulocalbin-1 (331 aa).

The signal sequence occupies residues 1-29; the sequence is MARGGRGRRLGLALGLLLALVLAPRVLRA. Asn-53 carries N-linked (GlcNAc...) asparagine glycosylation. Position 55 is a phosphoserine (Ser-55). Thr-76 is modified (phosphothreonine). 6 consecutive EF-hand domains span residues 79–114, 115–150, 166–201, 203–238, 244–279, and 280–315; these read ESKERLGKIVDRIDNDGDGFVTTEELKTWIKRVQKR, YIFDNVAKVWKDYDRDKDDKISWEEYKQATYGYYLG, KMLPRDERRFKAADLNGDLTATREEFTAFLHPEEFE, MKEIVVLETLEDIDKNGDGFVDQDEYIADMFSHEEN, WVLSEREQFNEFRDLNKDGKLDKDEIRHWILPQDYD, and HAQAEARHLVYESDKNKDEKLTKEEILENWNMFVGS. The residue at position 80 (Ser-80) is a Phosphoserine; by FAM20C. The Ca(2+) site is built by Asp-92, Asp-94, Asp-96, Glu-103, Asp-128, Asp-130, Asp-132, Lys-134, Glu-139, Asp-179, Asn-181, Asp-183, Thr-185, Glu-190, Asp-216, Asn-218, Asp-220, Glu-227, Asp-257, Asn-259, Asp-261, Lys-263, Glu-268, Asp-293, Asn-295, Asp-297, Lys-299, and Glu-304. The Prevents secretion from ER signature appears at 328–331; sequence HDEL.

It belongs to the CREC family. O-glycosylated. O-mannosylated by POMT1 and POMT2 and elongated by POMGNT1.

It localises to the endoplasmic reticulum lumen. Its function is as follows. May regulate calcium-dependent activities in the endoplasmic reticulum lumen or post-ER compartment. This Homo sapiens (Human) protein is Reticulocalbin-1 (RCN1).